Here is a 285-residue protein sequence, read N- to C-terminus: ATP synthase gamma chain (285 aa).

Belongs to the ATPase gamma chain family. In terms of assembly, F-type ATPases have 2 components, CF(1) - the catalytic core - and CF(0) - the membrane proton channel. CF(1) has five subunits: alpha(3), beta(3), gamma(1), delta(1), epsilon(1). CF(0) has three main subunits: a, b and c.

The protein resides in the cell inner membrane. Its function is as follows. Produces ATP from ADP in the presence of a proton gradient across the membrane. The gamma chain is believed to be important in regulating ATPase activity and the flow of protons through the CF(0) complex. The protein is ATP synthase gamma chain of Protochlamydia amoebophila (strain UWE25).